The sequence spans 179 residues: 3-hydroxyanthranilate 3,4-dioxygenase (179 aa).

Arg47 lines the O2 pocket. 3 residues coordinate Fe cation: His51, Glu57, and His96. Glu57 serves as a coordination point for substrate. 2 residues coordinate substrate: Arg100 and Glu110. Residues Cys125, Cys128, Cys162, and Cys165 each contribute to the Fe cation site.

The protein belongs to the 3-HAO family. Fe(2+) serves as cofactor.

It carries out the reaction 3-hydroxyanthranilate + O2 = (2Z,4Z)-2-amino-3-carboxymuconate 6-semialdehyde. Its pathway is cofactor biosynthesis; NAD(+) biosynthesis; quinolinate from L-kynurenine: step 3/3. Its function is as follows. Catalyzes the oxidative ring opening of 3-hydroxyanthranilate to 2-amino-3-carboxymuconate semialdehyde, which spontaneously cyclizes to quinolinate. In Bacillus cereus (strain 03BB102), this protein is 3-hydroxyanthranilate 3,4-dioxygenase.